We begin with the raw amino-acid sequence, 339 residues long: Phenylalanine--tRNA ligase alpha subunit (339 aa).

Glutamate 253 lines the Mg(2+) pocket.

This sequence belongs to the class-II aminoacyl-tRNA synthetase family. Phe-tRNA synthetase alpha subunit type 1 subfamily. In terms of assembly, tetramer of two alpha and two beta subunits. The cofactor is Mg(2+).

Its subcellular location is the cytoplasm. The catalysed reaction is tRNA(Phe) + L-phenylalanine + ATP = L-phenylalanyl-tRNA(Phe) + AMP + diphosphate + H(+). The polypeptide is Phenylalanine--tRNA ligase alpha subunit (Chromohalobacter salexigens (strain ATCC BAA-138 / DSM 3043 / CIP 106854 / NCIMB 13768 / 1H11)).